Reading from the N-terminus, the 556-residue chain is MDSLARQSAKICPFVSRVTSSMQQVQVLHKTNMSAMAQQCPVMRRAMAARGYVTASPPAGAAAADVGEARPITPVLERGTQERTFDYDGLFETELQKKRLDSSYRFFNNINRLAKEYPMAHRLEEEDKVTVWCSNDYLTYSRNEKVMETMKRTIDKYGAGAGGTRNIAGHNRHAMRLEAELAALHKKEGALVFSSCFVANDAVLSLLGQKMPNMVIFSDEMNHASMIMGIKHANVQKHIFRHNDLQHLEELLAMYPKSQPKLIAFESVYSMSGSVADIRKICDLAEKYGALTFLDEVHSVGLYGPHGAGVAEHLDFEAHRKAGLASPAQTTVLDRVDMITATLGKSFGSVGGYLAASEKLVDFVRSYAPGFIFTSSLPPAVMAGSAAAVFDQRSSLHLRQLQQKHTSYVKTGLGDLGIPVQPNPSHIVPVLVGNPDLAKRASDILMEKHRIYVQAINFPTVPRGTERLRITPTPGHTNDLSDVLLDAMDDVWKTLQLPRVSDWAAHGGLLGVGEPDYVPEANLWTEEQMSLTNDDLHPSVFSPVEKFLEVSSGIKA.

The N-terminal 46 residues, 1-46 (MDSLARQSAKICPFVSRVTSSMQQVQVLHKTNMSAMAQQCPVMRRA), are a transit peptide targeting the mitochondrion. The substrate site is built by Arg-105, Ser-218, and Lys-237. The pyridoxal 5'-phosphate site is built by Ser-270, His-298, and Thr-342. Lys-345 is an active-site residue. Lys-345 bears the N6-(pyridoxal phosphate)lysine mark. Positions 374 and 375 each coordinate pyridoxal 5'-phosphate. Residue Thr-460 coordinates substrate.

The protein belongs to the class-II pyridoxal-phosphate-dependent aminotransferase family. In terms of assembly, homodimer. Requires pyridoxal 5'-phosphate as cofactor.

It localises to the mitochondrion matrix. The catalysed reaction is succinyl-CoA + glycine + H(+) = 5-aminolevulinate + CO2 + CoA. Its pathway is porphyrin-containing compound metabolism; protoporphyrin-IX biosynthesis; 5-aminolevulinate from glycine: step 1/1. Functionally, catalyzes the synthesis of 5-aminolevulinate (ALA) from succinyl-CoA and glycine, the first and rate-limiting step in heme biosynthesis. This is 5-aminolevulinate synthase, mitochondrial (HEM1) from Eremothecium gossypii (strain ATCC 10895 / CBS 109.51 / FGSC 9923 / NRRL Y-1056) (Yeast).